The sequence spans 337 residues: Ferredoxin--NADP reductase (337 aa).

7 residues coordinate FAD: Glu-42, Gln-50, Tyr-55, Val-97, Phe-130, Asp-292, and Thr-333.

It belongs to the ferredoxin--NADP reductase type 2 family. Homodimer. Requires FAD as cofactor.

The catalysed reaction is 2 reduced [2Fe-2S]-[ferredoxin] + NADP(+) + H(+) = 2 oxidized [2Fe-2S]-[ferredoxin] + NADPH. In Streptococcus mutans serotype c (strain ATCC 700610 / UA159), this protein is Ferredoxin--NADP reductase.